The chain runs to 183 residues: UPF0397 protein EF_2154 (183 aa).

Helical transmembrane passes span I10 to P30, F44 to G64, G74 to A94, I115 to L135, and Q147 to M167.

This sequence belongs to the UPF0397 family.

The protein resides in the cell membrane. The polypeptide is UPF0397 protein EF_2154 (Enterococcus faecalis (strain ATCC 700802 / V583)).